We begin with the raw amino-acid sequence, 308 residues long: Coenzyme PQQ synthesis protein B (308 aa).

It belongs to the PqqB family.

It functions in the pathway cofactor biosynthesis; pyrroloquinoline quinone biosynthesis. May be involved in the transport of PQQ or its precursor to the periplasm. The polypeptide is Coenzyme PQQ synthesis protein B (Rhodopseudomonas palustris (strain TIE-1)).